Reading from the N-terminus, the 107-residue chain is U20-lycotoxin-Ls1b (107 aa).

Positions 1–30 are cleaved as a signal peptide; the sequence is MFSTSDQVSKMNSRILSALLILGIATCVIA. The WAP domain maps to 31–76; the sequence is GGFCPKSRHPQCNLSYKINDCCAQSDCRVGSVCCVEGCGNVCRAES. Intrachain disulfides connect Cys-34-Cys-64, Cys-42-Cys-68, Cys-51-Cys-63, Cys-52-Cys-90, and Cys-57-Cys-72.

The protein belongs to the venom protein 11 family. 02 (wap-2) subfamily. Contains 5 disulfide bonds. As to expression, expressed by the venom gland.

The protein localises to the secreted. In terms of biological role, has antibacterial activity. The protein is U20-lycotoxin-Ls1b of Lycosa singoriensis (Wolf spider).